Here is a 280-residue protein sequence, read N- to C-terminus: uncharacterized protein (280 aa).

Composition is skewed to basic and acidic residues over residues 110–122 (EKQA…ERLQ), 167–177 (ATGEERAECGR), 223–261 (ARQH…RPQQ), and 269–280 (DVDRSKSCLEAE). 3 disordered regions span residues 110 to 137 (EKQA…KTEH), 151 to 177 (HRGE…ECGR), and 219 to 280 (TIID…LEAE).

This is an uncharacterized protein from Agrobacterium vitis (Rhizobium vitis).